Reading from the N-terminus, the 290-residue chain is MQQKFGGRLGHALSFLRHDGGHFAQFVWSRFQHDRLTVTAGYLAYVTLLSLVPMIAVVFGMMSAFPVFQTLKQAMEQFVYHNFVPTAGEMLKEYIDGFVANATNTTAVGIGALIVVALMLISAIDKNLNYIWRSTQGRPLAQAFAMYWMILTLGPVLIGGSIAISSYIFSLRLFGAESLFGIGYLLLRSLPFLFSVLTFLLVYTVVPNCKVRLVHAFIGALVAATLFELAKRGFAIYITNFPSYQAIYGALATIPVLFVWVYLSWLVVLLGAETTACLGEYEKPVSEELA.

6 helical membrane passes run 48 to 68 (LLSLVPMIAVVFGMMSAFPVF), 104 to 124 (NTTAVGIGALIVVALMLISAI), 144 to 164 (FAMYWMILTLGPVLIGGSIAI), 182 to 202 (IGYLLLRSLPFLFSVLTFLLV), 216 to 236 (AFIGALVAATLFELAKRGFAI), and 250 to 270 (ALATIPVLFVWVYLSWLVVLL).

Belongs to the UPF0761 family.

Its subcellular location is the cell inner membrane. This chain is UPF0761 membrane protein ASA_4118, found in Aeromonas salmonicida (strain A449).